A 152-amino-acid polypeptide reads, in one-letter code: Sulfur-rich protein (152 aa).

Residues 1-11 (MSTTPIVSGVT) show a composition bias toward polar residues. The tract at residues 1 to 21 (MSTTPIVSGVTSQNNSSENVS) is disordered. The span at 12 to 21 (SQNNSSENVS) shows a compositional bias: low complexity. A run of 2 helical transmembrane segments spans residues 44-64 (VGLAVVGIFLVILSIVLLFIL) and 73-93 (IYLAIPAILGCVNICIGILSM).

Its subcellular location is the membrane. The polypeptide is Sulfur-rich protein (srp) (Chlamydia muridarum (strain MoPn / Nigg)).